We begin with the raw amino-acid sequence, 367 residues long: NADH-quinone oxidoreductase subunit H (367 aa).

A run of 8 helical transmembrane segments spans residues 18 to 38 (VLLF…VAYL), 87 to 107 (LCFL…WAVI), 132 to 152 (IGVL…IIAG), 180 to 200 (LTIV…IVIA), 204 to 224 (MPYW…ISAL), 257 to 277 (FFLG…IFFF), 291 to 311 (IIPG…CFIW), and 328 to 348 (GWKV…GILV).

This sequence belongs to the complex I subunit 1 family. NDH-1 is composed of 14 different subunits. Subunits NuoA, H, J, K, L, M, N constitute the membrane sector of the complex.

The protein localises to the cell inner membrane. The enzyme catalyses a quinone + NADH + 5 H(+)(in) = a quinol + NAD(+) + 4 H(+)(out). Functionally, NDH-1 shuttles electrons from NADH, via FMN and iron-sulfur (Fe-S) centers, to quinones in the respiratory chain. The immediate electron acceptor for the enzyme in this species is believed to be ubiquinone. Couples the redox reaction to proton translocation (for every two electrons transferred, four hydrogen ions are translocated across the cytoplasmic membrane), and thus conserves the redox energy in a proton gradient. This subunit may bind ubiquinone. This chain is NADH-quinone oxidoreductase subunit H, found in Ehrlichia ruminantium (strain Gardel).